The sequence spans 214 residues: Variable small protein 24 (214 aa).

A signal peptide spans 1 to 18 (MRKRISAIIMTLFMVFMS). Cysteine 19 carries the N-palmitoyl cysteine lipid modification. Cysteine 19 carries S-diacylglycerol cysteine lipidation. Residues 146–172 (TELGKKDASDDDTKKAIKKDNSDKTKG) are disordered.

The protein belongs to the variable small protein (Vsp) family.

The protein localises to the cell outer membrane. The Vlp and Vsp proteins are antigenically distinct proteins, only one vlp or vsp gene is transcriptionally active at any one time. Switching between these genes is a mechanism of host immune response evasion. The sequence is that of Variable small protein 24 from Borrelia hermsii.